Here is a 382-residue protein sequence, read N- to C-terminus: E3 ubiquitin-protein ligase RNF133 (382 aa).

Residues 65–167 (SSILKRVAGV…IKGMEILHLI (103 aa)) form the PA domain. Residues 190 to 210 (YFVSFMIVTTATLAYFTFYHI) form a helical membrane-spanning segment. Residues 256 to 297 (CVICFEAYKPNEIVRILTCKHFFHKNCIDPWILAHGTCPMCK) form an RING-type; atypical zinc finger. Residues 328-382 (TLSPVEEETNYELPPARTSSKVTHVQEHPTSSANAGSQPPEAEETSHPSHGQQVL) form a disordered region. Residues 344 to 364 (RTSSKVTHVQEHPTSSANAGS) are compositionally biased toward polar residues.

As to quaternary structure, interacts with E3 ligase UBE2J1. Auto-ubiquitinated. As to expression, expression is testis-specific.

The protein resides in the endoplasmic reticulum membrane. The catalysed reaction is S-ubiquitinyl-[E2 ubiquitin-conjugating enzyme]-L-cysteine + [acceptor protein]-L-lysine = [E2 ubiquitin-conjugating enzyme]-L-cysteine + N(6)-ubiquitinyl-[acceptor protein]-L-lysine.. The protein operates within protein modification; protein ubiquitination. In terms of biological role, has E3 ubiquitin-protein ligase activity. Plays a role in male fecundity through the interaction with the E2 ubituitin-protein ligase UBE2J1. The polypeptide is E3 ubiquitin-protein ligase RNF133 (Rnf133) (Mus musculus (Mouse)).